A 212-amino-acid chain; its full sequence is KxDL motif-containing protein CG10681 (212 aa).

The disordered stretch occupies residues 128-159 (RSSLAEEAEDDTEAQAKKTAETPAPAAAKPVL). Over residues 148–157 (ETPAPAAAKP) the composition is skewed to low complexity.

This sequence belongs to the KXD1 family.

This is KxDL motif-containing protein CG10681 from Drosophila melanogaster (Fruit fly).